The sequence spans 209 residues: Uracil phosphoribosyltransferase (209 aa).

5-phospho-alpha-D-ribose 1-diphosphate-binding positions include R79, R104, and 131–139; that span reads DPMLATGAS. Uracil-binding positions include I194 and 199–201; that span reads GDA. D200 contributes to the 5-phospho-alpha-D-ribose 1-diphosphate binding site.

It belongs to the UPRTase family. Requires Mg(2+) as cofactor.

It catalyses the reaction UMP + diphosphate = 5-phospho-alpha-D-ribose 1-diphosphate + uracil. It functions in the pathway pyrimidine metabolism; UMP biosynthesis via salvage pathway; UMP from uracil: step 1/1. With respect to regulation, allosterically activated by GTP. Functionally, catalyzes the conversion of uracil and 5-phospho-alpha-D-ribose 1-diphosphate (PRPP) to UMP and diphosphate. This chain is Uracil phosphoribosyltransferase, found in Staphylococcus aureus (strain JH1).